A 143-amino-acid chain; its full sequence is uncharacterized protein (143 aa).

Positions 35–59 (ITKDRGDRDDGRYGEPRIQRKPGQL) are disordered. Positions 36–52 (TKDRGDRDDGRYGEPRI) are enriched in basic and acidic residues.

This is an uncharacterized protein from Streptomyces fradiae (Streptomyces roseoflavus).